The following is a 444-amino-acid chain: S-locus-specific glycoprotein (444 aa).

The signal sequence occupies residues 1–28 (MRGVIPNYHHSYTLFFFVILVLFPHVFS). In terms of domain architecture, Bulb-type lectin spans 31-159 (TLSPNEALTI…KTNDLDRFMW (129 aa)). Asparagine 43, asparagine 125, asparagine 243, and asparagine 396 each carry an N-linked (GlcNAc...) asparagine glycan. The PAN domain occupies 356-437 (CGEGDGFLRM…GGQDLYVKVA (82 aa)). Disulfide bonds link cysteine 387-cysteine 412 and cysteine 395-cysteine 397.

Stigma.

In terms of biological role, involved in sporophytic self-incompatibility system (the inability of flowering plants to achieve self-fertilization). In Brassica oleracea var. alboglabra (Chinese kale), this protein is S-locus-specific glycoprotein (SLSG).